Consider the following 786-residue polypeptide: Protein SEY1 (786 aa).

The Cytoplasmic segment spans residues M1–R684. Residues G35–Y262 enclose the GB1/RHD3-type G domain. GTP is bound at residue G45–S52. A coiled-coil region spans residues K355 to E375. The chain crosses the membrane as a helical span at residues I685–L705. At R706–P708 the chain is on the lumenal side. A helical membrane pass occupies residues A709–L729. The Cytoplasmic portion of the chain corresponds to W730–L786. The interval I765–L786 is disordered.

Belongs to the TRAFAC class dynamin-like GTPase superfamily. GB1/RHD3 GTPase family. RHD3 subfamily.

It localises to the endoplasmic reticulum membrane. Functionally, cooperates with the reticulon proteins and tubule-shaping DP1 family proteins to generate and maintain the structure of the tubular endoplasmic reticulum network. Has GTPase activity, which is required for its function in ER organization. The sequence is that of Protein SEY1 from Kluyveromyces lactis (strain ATCC 8585 / CBS 2359 / DSM 70799 / NBRC 1267 / NRRL Y-1140 / WM37) (Yeast).